The following is a 359-amino-acid chain: Phospho-N-acetylmuramoyl-pentapeptide-transferase (359 aa).

10 helical membrane-spanning segments follow: residues 27–47, 71–91, 93–113, 134–154, 170–190, 203–223, 234–254, 262–282, 286–306, and 336–356; these read IGAA…FIRT, VPTM…LLWA, LDNP…MIGA, LLLQ…HPGY, LGWF…NAVN, MVVS…VVLA, SGEL…FLWF, FMGD…AIII, FLLA…MLQV, and KVVV…IATL.

It belongs to the glycosyltransferase 4 family. MraY subfamily. Mg(2+) serves as cofactor.

It localises to the cell inner membrane. It carries out the reaction UDP-N-acetyl-alpha-D-muramoyl-L-alanyl-gamma-D-glutamyl-meso-2,6-diaminopimeloyl-D-alanyl-D-alanine + di-trans,octa-cis-undecaprenyl phosphate = di-trans,octa-cis-undecaprenyl diphospho-N-acetyl-alpha-D-muramoyl-L-alanyl-D-glutamyl-meso-2,6-diaminopimeloyl-D-alanyl-D-alanine + UMP. It participates in cell wall biogenesis; peptidoglycan biosynthesis. In terms of biological role, catalyzes the initial step of the lipid cycle reactions in the biosynthesis of the cell wall peptidoglycan: transfers peptidoglycan precursor phospho-MurNAc-pentapeptide from UDP-MurNAc-pentapeptide onto the lipid carrier undecaprenyl phosphate, yielding undecaprenyl-pyrophosphoryl-MurNAc-pentapeptide, known as lipid I. This chain is Phospho-N-acetylmuramoyl-pentapeptide-transferase, found in Desulfotalea psychrophila (strain LSv54 / DSM 12343).